The sequence spans 81 residues: Conotoxin ViKr92 (81 aa).

A signal peptide spans 1–22; it reads MKLTWMMIVAVLFLTAWTFVTA. The propeptide occupies 23-51; the sequence is DDTRYKLENPFLKARNELQKLEASQLNER. 3 cysteine pairs are disulfide-bonded: Cys53–Cys70, Cys60–Cys74, and Cys69–Cys78.

This sequence belongs to the conotoxin O1 superfamily. In terms of tissue distribution, expressed by the venom duct.

Its subcellular location is the secreted. The polypeptide is Conotoxin ViKr92 (Conus virgo (Virgin cone)).